The chain runs to 623 residues: (-)-limonene synthase TPS1, chloroplastic (623 aa).

A chloroplast-targeting transit peptide spans 1–60; the sequence is MQCIAFHQFASSSSLPIWSSIDNRFTPKTSITSISKPKPKLKSKSNLKSRSRSSTCYPIQ. A disordered region spans residues 29–52; that stretch reads TSITSISKPKPKLKSKSNLKSRSR. Over residues 37–51 the composition is skewed to basic residues; that stretch reads PKPKLKSKSNLKSRS. Positions 337, 374, 378, 516, and 519 each coordinate (2E)-geranyl diphosphate. 2 residues coordinate Mg(2+): Asp374 and Asp378. The DDXXD motif motif lies at 374–378; that stretch reads DDMHD. Residues Asp519, Thr523, and Glu527 each coordinate Mg(2+).

The protein belongs to the terpene synthase family. Tpsb subfamily. It depends on Mg(2+) as a cofactor. Mn(2+) serves as cofactor. Requires K(+) as cofactor. In terms of tissue distribution, trichome.

The protein localises to the plastid. It localises to the chloroplast. The catalysed reaction is (2E)-geranyl diphosphate = (4S)-limonene + diphosphate. The enzyme catalyses (2E)-geranyl diphosphate = terpinolene + diphosphate. It catalyses the reaction (2E)-geranyl diphosphate = (1R,5R)-alpha-pinene + diphosphate. It carries out the reaction (2E)-geranyl diphosphate = (1R,5R)-beta-pinene + diphosphate. The catalysed reaction is (2E)-geranyl diphosphate = beta-myrcene + diphosphate. The enzyme catalyses (2E)-geranyl diphosphate = (4R)-limonene + diphosphate. Its pathway is secondary metabolite biosynthesis; terpenoid biosynthesis. The protein operates within terpene metabolism; (4S)-limonene biosynthesis; (4S)-limonene from geranyl diphosphate: step 1/1. Functionally, involved in monoterpene (C10) olefins biosynthesis, constituants of cannabinoids and terpenoids-rich resins. Catalyzes mainly the conversion of (2E)-geranyl diphosphate to (-)-limonene, and also produces minor products such as (+)-limonene, (+)-alpha-pinene, terpinolene, (+)-beta-pinene and beta-myrcene. This is (-)-limonene synthase TPS1, chloroplastic from Cannabis sativa (Hemp).